The sequence spans 267 residues: Large ribosomal subunit protein uL4 (267 aa).

The protein belongs to the universal ribosomal protein uL4 family. In terms of assembly, part of the 50S ribosomal subunit.

In terms of biological role, one of the primary rRNA binding proteins, this protein initially binds near the 5'-end of the 23S rRNA. It is important during the early stages of 50S assembly. It makes multiple contacts with different domains of the 23S rRNA in the assembled 50S subunit and ribosome. Its function is as follows. Forms part of the polypeptide exit tunnel. The polypeptide is Large ribosomal subunit protein uL4 (Saccharolobus islandicus (strain M.16.27) (Sulfolobus islandicus)).